A 427-amino-acid chain; its full sequence is Glutamate-1-semialdehyde 2,1-aminomutase (427 aa).

N6-(pyridoxal phosphate)lysine is present on Lys-265.

This sequence belongs to the class-III pyridoxal-phosphate-dependent aminotransferase family. HemL subfamily. In terms of assembly, homodimer. It depends on pyridoxal 5'-phosphate as a cofactor.

It localises to the cytoplasm. The enzyme catalyses (S)-4-amino-5-oxopentanoate = 5-aminolevulinate. Its pathway is porphyrin-containing compound metabolism; protoporphyrin-IX biosynthesis; 5-aminolevulinate from L-glutamyl-tRNA(Glu): step 2/2. In Mannheimia succiniciproducens (strain KCTC 0769BP / MBEL55E), this protein is Glutamate-1-semialdehyde 2,1-aminomutase.